Here is a 409-residue protein sequence, read N- to C-terminus: Argininosuccinate synthase (409 aa).

10-18 lines the ATP pocket; that stretch reads AYSGGLDTS. Residue Y87 coordinates L-citrulline. An ATP-binding site is contributed by G117. T119, N123, and D124 together coordinate L-aspartate. Residue N123 coordinates L-citrulline. 5 residues coordinate L-citrulline: R127, S175, S184, E260, and Y272.

It belongs to the argininosuccinate synthase family. Type 1 subfamily. As to quaternary structure, homotetramer.

It is found in the cytoplasm. The enzyme catalyses L-citrulline + L-aspartate + ATP = 2-(N(omega)-L-arginino)succinate + AMP + diphosphate + H(+). The protein operates within amino-acid biosynthesis; L-arginine biosynthesis; L-arginine from L-ornithine and carbamoyl phosphate: step 2/3. The protein is Argininosuccinate synthase of Rubrobacter xylanophilus (strain DSM 9941 / JCM 11954 / NBRC 16129 / PRD-1).